Here is a 443-residue protein sequence, read N- to C-terminus: Ribitol-5-phosphate xylosyltransferase 1 (443 aa).

Topologically, residues 1–9 are cytoplasmic; that stretch reads MRLTRKRLC. The helical; Signal-anchor for type II membrane protein transmembrane segment at 10–30 threads the bilayer; sequence SFLIALYCLFSLYAAYHVFFG. Over 31-443 the chain is Extracellular; it reads RRRQAPAGSP…ESSFLMNNKS (413 aa). Residues 35–76 are disordered; sequence APAGSPRGLRKGAAPARERRGREQSTLESEEWNPWEGDEKNE. The segment covering 50-59 has biased composition (basic and acidic residues); the sequence is ARERRGREQS.

Belongs to the RXYLT1 family. In terms of assembly, forms a complex composed of FKTN/fukutin, FKRP and RXYLT1/TMEM5.

The protein localises to the golgi apparatus membrane. It catalyses the reaction 3-O-[Rib-ol-P-Rib-ol-P-3-beta-D-GalNAc-(1-&gt;3)-beta-D-GlcNAc-(1-&gt;4)-(O-6-P-alpha-D-Man)]-Thr-[protein] + UDP-alpha-D-xylose = 3-O-[beta-D-Xyl-(1-&gt;4)-Rib-ol-P-Rib-ol-P-3-beta-D-GalNAc-(1-&gt;3)-beta-D-GlcNAc-(1-&gt;4)-(O-6-P-alpha-D-Man)]-Thr-[protein] + UDP + H(+). Its pathway is protein modification; protein glycosylation. In terms of biological role, acts as a UDP-D-xylose:ribitol-5-phosphate beta1,4-xylosyltransferase, which catalyzes the transfer of UDP-D-xylose to ribitol 5-phosphate (Rbo5P) to form the Xylbeta1-4Rbo5P linkage on O-mannosyl glycan. Participates in the biosynthesis of the phosphorylated O-mannosyl trisaccharide (N-acetylgalactosamine-beta-3-N-acetylglucosamine-beta-4-(phosphate-6-)mannose), a carbohydrate structure present in alpha-dystroglycan (DAG1), which is required for binding laminin G-like domain-containing extracellular proteins with high affinity. This chain is Ribitol-5-phosphate xylosyltransferase 1, found in Homo sapiens (Human).